The following is a 321-amino-acid chain: Probable 3-hydroxyisobutyrate dehydrogenase, mitochondrial (321 aa).

NAD(+) contacts are provided by residues 23 to 52 (KTVGFIGLGNMGGHQAINLIKKGHNLIVFD), 86 to 87 (LP), and threonine 117. Lysine 192 is an active-site residue. Lysine 267 is a binding site for NAD(+).

The protein belongs to the HIBADH-related family. 3-hydroxyisobutyrate dehydrogenase subfamily.

It is found in the mitochondrion. The catalysed reaction is 3-hydroxy-2-methylpropanoate + NAD(+) = 2-methyl-3-oxopropanoate + NADH + H(+). It participates in amino-acid degradation; L-valine degradation. The polypeptide is Probable 3-hydroxyisobutyrate dehydrogenase, mitochondrial (hibA) (Dictyostelium discoideum (Social amoeba)).